Here is a 416-residue protein sequence, read N- to C-terminus: MKKDLFLISLVSFVFFIFGNWILSLTSLDEGRNFYATLHMLRTGDFIVPYYNCNYRFEKPPMLYWLGSLSFLIFGISEFSARLISGLSAFGTTLLIYFITLKHVSREKALLSALTFPLFIHTWIESRAYVPEFTLVFFSTLGVYLFSIDRFTLGWTALALAFLTKGPVGVILPIGIYLLWRRDLKFLNFKGVLLFILIGFSWYFLMIYKFGFNFFFKFFIFENIYRFTGTYQIHNMPIYFYPLVILVSSILFLPVFLKILKDFDKRLLPFAGWFLLVLVFYSLSKNKLHHYILFSYPALSVIIGFYLTKRYIKYAYIVGSFLLLILMFGVYIYEQKRFTPKAVDFLKNSEPQKLYFYKHENSAIVAYLYRCITKENKFKKGDYVITKKKYLRDFKNYKLLIEGLEFEGKEVLIKVE.

Helical transmembrane passes span 5–25 (LFLI…ILSL), 84–104 (ISGL…LKHV), 128–148 (AYVP…LFSI), 160–180 (LAFL…YLLW), 192–212 (VLLF…KFGF), 237–257 (PIYF…PVFL), 263–283 (FDKR…FYSL), 288–308 (LHHY…FYLT), and 312–332 (IKYA…GVYI).

It belongs to the glycosyltransferase 83 family.

The protein resides in the cell membrane. This is an uncharacterized protein from Aquifex aeolicus (strain VF5).